We begin with the raw amino-acid sequence, 354 residues long: Putative Xaa-Pro aminopeptidase (354 aa).

Residues aspartate 213, aspartate 224, histidine 290, glutamate 319, and glutamate 333 each contribute to the Mn(2+) site.

It belongs to the peptidase M24B family. Mn(2+) serves as cofactor.

The enzyme catalyses Release of any N-terminal amino acid, including proline, that is linked to proline, even from a dipeptide or tripeptide.. This chain is Putative Xaa-Pro aminopeptidase (pepP), found in Mycoplasma pneumoniae (strain ATCC 29342 / M129 / Subtype 1) (Mycoplasmoides pneumoniae).